Consider the following 269-residue polypeptide: uncharacterized protein (269 aa).

This is an uncharacterized protein from Escherichia coli (strain K12).